We begin with the raw amino-acid sequence, 125 residues long: MAKHITSSEYDAVIATAYCYVEAMEKGSSKRAKEGFHPDGGIYGYVDGEFKGGSISNLFDFLDQSPEGHKIKAHLDVIAMTPTTAIVKTEVEMNPPETDYTDFLGMVKIDGKWQIVSKIFHSYPR.

It carries out the reaction (2S)-3-(4-methoxyphenyl)-2-[(3S)-3-(methylamino)-8-oxo-1-azaspiro[4.5]decan-1-yl]propanal = (1S,3S,6S,7S,8R)-7-hydroxy-6-[(4-methoxyphenyl)methyl]-3-(methylamino)-5-azatricyclo[6.3.1.0(1,5)]dodecan-9-one. It participates in secondary metabolite biosynthesis. Its function is as follows. Aldolase; part of the gene cluster that mediates the biosynthesis of the alkaloid (-)-FR901483, a potent immunosuppressant that shows efficacy in animal models and a probable inhibitor of purine nucleotide biosynthesis by targeting phosphoribosylpyrophosphate amidotransferase (PPAT). Within the pathway, FrzH is a new kind of aldolase with no similarities to known aldolases, and which catalyzes the intramolecular aldol condensation via formation of a C9-C3' bond to yield an aza-tricyclic product. The biosynthesis of (-)-FR901483 starts with the condensation of two L-tyrosines to yield (S,S)-dityrosyl-piperazine. This process occurs in 3 steps with the non-canonical nonribosomal peptide synthetase FrzA catalyzing the reduction of L-tyrosine into L-tyrosinal, the spontaneous condensation of 2 L-tyrosinal units, and the subsequent reduction by the NmrA-like family domain-containing oxidoreductase FrzB. The cytochrome P450 monooxygenase FrzC then performs coupling between N10 and C1' to morph the piperazine into a 1,4-diazabicyclo[3.2.1]octane spiro-fused to a 2,5-cyclohexadienone. The dienone portion is further reduced to cyclohexanone by the flavin-dependent reductase FrzD. The methyltranserases (MTs) FrzE and FrzF are then involved in the methylation at the C10' amine and the C4 phenolic oxygen, respectively. The order of the two MTs appear to be interchangeable. Cleavage of the C9-N10' bond by the dioxygenase FrzG then leads to formation of a conjugated iminium. In addition to the oxidation of C9, an additional dehydrogenation between C7 and C8 can occur to give a likely shunt product. The next biosynthetic step is the intramolecular aldol condensation catalyzed by the newly identified aldolase FrzH to yield an aza-tricyclic product with the formation of a C9-C3' bond. The short-chain dehydrogenase/reductase FrzI then produces dephospho-(-)-FR901483 that is phosphorylated at C4'-OH into (-)-FR901483 by the phosphotransferase FrzJ. In Cladobotryum sp, this protein is Aldolase FrzH.